We begin with the raw amino-acid sequence, 510 residues long: Pantetheinase (510 aa).

A signal peptide spans 1–22; sequence MIMSQLLNYVAVLFFCVSRASS. The region spanning 31 to 307 is the CN hydrolase domain; the sequence is YEHAVILPNA…GKLLLAQLDS (277 aa). N-linked (GlcNAc...) asparagine glycosylation occurs at N39. E80 acts as the Proton acceptor in catalysis. N87 and N147 each carry an N-linked (GlcNAc...) asparagine glycan. The Proton donor role is filled by K179. N201 is a glycosylation site (N-linked (GlcNAc...) asparagine). C212 functions as the Nucleophile in the catalytic mechanism. N-linked (GlcNAc...) asparagine glycosylation is found at N316 and N354. A lipid anchor (GPI-anchor amidated aspartate) is attached at D492. Residues 493-510 constitute a propeptide, removed in mature form; sequence LTTQALRLNPKTDAWKSK. Residue T504 is glycosylated (O-linked (GalNAc...) threonine).

It belongs to the carbon-nitrogen hydrolase superfamily. BTD/VNN family. As to quaternary structure, monomer.

It localises to the cell membrane. The catalysed reaction is (R)-pantetheine + H2O = cysteamine + (R)-pantothenate. Amidohydrolase that hydrolyzes specifically one of the carboamide linkages in D-pantetheine thus recycling pantothenic acid (vitamin B5) and releasing cysteamine. In Bos taurus (Bovine), this protein is Pantetheinase (VNN1).